Reading from the N-terminus, the 822-residue chain is Tubulin polyglutamylase TTLL6 (822 aa).

The segment at 1 to 24 is disordered; it reads MLQCLTSESEEGAEEREESSTEDL. Acidic residues predominate over residues 8 to 24; the sequence is ESEEGAEEREESSTEDL. Positions 57 to 400 constitute a TTL domain; it reads KKRLVINLSN…GNCDKKKVLE (344 aa). Residues Lys-174, 180–181, 202–205, and 215–217 each bind ATP; these read QG, QLYI, and KFD. Gln-180 provides a ligand contact to a protein. Arg-241 is an L-glutamate binding site. Position 263-264 (263-264) interacts with ATP; sequence TN. L-glutamate is bound by residues Tyr-265, Ser-266, and Lys-283. The Mg(2+) site is built by Asp-346, Glu-359, and Asn-361. His-362 provides a ligand contact to a protein. The tract at residues 371–450 is c-MTBD region; it reads KLDKEVKDSL…CGGFRLIYPG (80 aa). Lys-377 contacts L-glutamate. Disordered regions lie at residues 736 to 772 and 791 to 822; these read PLFP…SVFV and TQAR…TATA. Positions 802–814 are enriched in polar residues; sequence SHSGTTTRDSSTQ.

Belongs to the tubulin--tyrosine ligase family. As to quaternary structure, found in a complex with CEP41. Mg(2+) serves as cofactor. As to expression, highly expressed in testis. Expressed in brain, heart, kidney, liver, lung, muscle and trachea. In the brain, specifically expressed in ependymal cilia.

It localises to the cytoplasm. Its subcellular location is the cytoskeleton. The protein localises to the cilium axoneme. The protein resides in the cilium basal body. It catalyses the reaction L-glutamyl-[protein] + L-glutamate + ATP = gamma-L-glutamyl-L-glutamyl-[protein] + ADP + phosphate + H(+). It carries out the reaction (L-glutamyl)(n)-gamma-L-glutamyl-L-glutamyl-[protein] + L-glutamate + ATP = (L-glutamyl)(n+1)-gamma-L-glutamyl-L-glutamyl-[protein] + ADP + phosphate + H(+). Polyglutamylase which modifies both tubulin and non-tubulin proteins, generating alpha-linked polyglutamate side chains on the gamma-carboxyl group of specific glutamate residues of target proteins. Preferentially mediates ATP-dependent long polyglutamate chain elongation over the initiation step of the polyglutamylation reaction. Preferentially modifies the alpha-tubulin tail over a beta-tail. Promotes tubulin polyglutamylation which stimulates spastin/SPAST-mediated microtubule severing, thereby regulating microtubule functions. Mediates microtubule polyglutamylation in primary cilia axoneme which is important for ciliary structural formation and motility. Mediates microtubule polyglutamylation in motile cilia, necessary for the regulation of ciliary coordinated beating. Polyglutamylates non-tubulin protein nucleotidyltransferase CGAS, leading to CGAS DNA-binding inhibition, thereby preventing antiviral defense response. The protein is Tubulin polyglutamylase TTLL6 of Mus musculus (Mouse).